The following is a 318-amino-acid chain: GPN-loop GTPase 2 (318 aa).

Residue 29–34 (GSGKST) participates in GTP binding. A Gly-Pro-Asn (GPN)-loop; involved in dimer interface motif is present at residues 85 to 87 (GPN). 187–190 (SKMD) lines the GTP pocket.

This sequence belongs to the GPN-loop GTPase family. Heterodimers with gpn1 or gpn3. Binds to RNA polymerase II (RNAPII).

In terms of biological role, small GTPase required for proper localization of RNA polymerase II and III (RNAPII and RNAPIII). May act at an RNAP assembly step prior to nuclear import. This Xenopus laevis (African clawed frog) protein is GPN-loop GTPase 2.